Consider the following 143-residue polypeptide: Lysozyme C (143 aa).

The N-terminal stretch at 1-15 (MKIPVFLLLLALANA) is a signal peptide. The C-type lysozyme domain occupies 16–143 (KVFQRCEWAR…LSAYIAGCGL (128 aa)). Disulfide bonds link Cys-21-Cys-141, Cys-45-Cys-129, Cys-79-Cys-94, and Cys-90-Cys-108. Residues Glu-50 and Asp-67 contribute to the active site.

Belongs to the glycosyl hydrolase 22 family. In terms of assembly, monomer.

It localises to the secreted. The enzyme catalyses Hydrolysis of (1-&gt;4)-beta-linkages between N-acetylmuramic acid and N-acetyl-D-glucosamine residues in a peptidoglycan and between N-acetyl-D-glucosamine residues in chitodextrins.. In terms of biological role, lysozymes have primarily a bacteriolytic function; those in tissues and body fluids are associated with the monocyte-macrophage system and enhance the activity of immunoagents. The chain is Lysozyme C from Takifugu rubripes (Japanese pufferfish).